The chain runs to 94 residues: Integration host factor subunit beta (94 aa).

This sequence belongs to the bacterial histone-like protein family. As to quaternary structure, heterodimer of an alpha and a beta chain.

Its function is as follows. This protein is one of the two subunits of integration host factor, a specific DNA-binding protein that functions in genetic recombination as well as in transcriptional and translational control. The polypeptide is Integration host factor subunit beta (Azoarcus sp. (strain BH72)).